The sequence spans 374 residues: Chaperone protein DnaJ (374 aa).

The J domain occupies 5-70 (DYYEVLGVNL…RKRASYDQFG (66 aa)). The segment at 133–210 (GLSRTIKVPT…CHGQGRQQQT (78 aa)) adopts a CR-type zinc-finger fold. Zn(2+) is bound by residues cysteine 146, cysteine 149, cysteine 162, cysteine 165, cysteine 184, cysteine 187, cysteine 198, and cysteine 201. CXXCXGXG motif repeat units follow at residues 146–153 (CKTCNGSG), 162–169 (CPRCNGSG), 184–191 (CSVCRGRG), and 198–205 (CTDCHGQG).

It belongs to the DnaJ family. In terms of assembly, homodimer. It depends on Zn(2+) as a cofactor.

It localises to the cytoplasm. Participates actively in the response to hyperosmotic and heat shock by preventing the aggregation of stress-denatured proteins and by disaggregating proteins, also in an autonomous, DnaK-independent fashion. Unfolded proteins bind initially to DnaJ; upon interaction with the DnaJ-bound protein, DnaK hydrolyzes its bound ATP, resulting in the formation of a stable complex. GrpE releases ADP from DnaK; ATP binding to DnaK triggers the release of the substrate protein, thus completing the reaction cycle. Several rounds of ATP-dependent interactions between DnaJ, DnaK and GrpE are required for fully efficient folding. Also involved, together with DnaK and GrpE, in the DNA replication of plasmids through activation of initiation proteins. The polypeptide is Chaperone protein DnaJ (Coxiella burnetii (strain RSA 493 / Nine Mile phase I)).